The chain runs to 131 residues: Small ribosomal subunit protein uS11 (131 aa).

It belongs to the universal ribosomal protein uS11 family. As to quaternary structure, part of the 30S ribosomal subunit. Interacts with proteins S7 and S18. Binds to IF-3.

Located on the platform of the 30S subunit, it bridges several disparate RNA helices of the 16S rRNA. Forms part of the Shine-Dalgarno cleft in the 70S ribosome. The polypeptide is Small ribosomal subunit protein uS11 (Deinococcus geothermalis (strain DSM 11300 / CIP 105573 / AG-3a)).